Here is a 96-residue protein sequence, read N- to C-terminus: Complement inhibitor RaCI4 (96 aa).

The N-terminal stretch at 1–24 (MSAFNIFALVVVVCALMINECCTS) is a signal peptide. Disulfide bonds link C37/C61, C42/C63, and C57/C78.

Belongs to the RaCI family. In terms of tissue distribution, expressed in salivary glands.

Its subcellular location is the secreted. Functionally, complement inhibitor. Prevents complement-mediated C5 activation by binding to C5. Binds C5 at a different binding site than the other tick complement inhibitors OmCI and CirpT1, and the drug eculizumab. Inhibits complement in human and guinea pig but not in other species tested (rabbit, rat, mouse, and pig). The chain is Complement inhibitor RaCI4 from Hyalomma rufipes (Tick).